The chain runs to 99 residues: Aspartyl/glutamyl-tRNA(Asn/Gln) amidotransferase subunit C (99 aa).

It belongs to the GatC family. As to quaternary structure, heterotrimer of A, B and C subunits.

It catalyses the reaction L-glutamyl-tRNA(Gln) + L-glutamine + ATP + H2O = L-glutaminyl-tRNA(Gln) + L-glutamate + ADP + phosphate + H(+). The catalysed reaction is L-aspartyl-tRNA(Asn) + L-glutamine + ATP + H2O = L-asparaginyl-tRNA(Asn) + L-glutamate + ADP + phosphate + 2 H(+). Its function is as follows. Allows the formation of correctly charged Asn-tRNA(Asn) or Gln-tRNA(Gln) through the transamidation of misacylated Asp-tRNA(Asn) or Glu-tRNA(Gln) in organisms which lack either or both of asparaginyl-tRNA or glutaminyl-tRNA synthetases. The reaction takes place in the presence of glutamine and ATP through an activated phospho-Asp-tRNA(Asn) or phospho-Glu-tRNA(Gln). This is Aspartyl/glutamyl-tRNA(Asn/Gln) amidotransferase subunit C from Albidiferax ferrireducens (strain ATCC BAA-621 / DSM 15236 / T118) (Rhodoferax ferrireducens).